The chain runs to 264 residues: S-adenosylmethionine decarboxylase proenzyme (264 aa).

Serine 113 acts as the Schiff-base intermediate with substrate; via pyruvic acid in catalysis. Residue serine 113 is modified to Pyruvic acid (Ser); by autocatalysis. Residue histidine 118 is the Proton acceptor; for processing activity of the active site. Residue cysteine 141 is the Proton donor; for catalytic activity of the active site.

Belongs to the prokaryotic AdoMetDC family. Type 2 subfamily. As to quaternary structure, heterooctamer of four alpha and four beta chains arranged as a tetramer of alpha/beta heterodimers. The cofactor is pyruvate. In terms of processing, is synthesized initially as an inactive proenzyme. Formation of the active enzyme involves a self-maturation process in which the active site pyruvoyl group is generated from an internal serine residue via an autocatalytic post-translational modification. Two non-identical subunits are generated from the proenzyme in this reaction, and the pyruvate is formed at the N-terminus of the alpha chain, which is derived from the carboxyl end of the proenzyme. The post-translation cleavage follows an unusual pathway, termed non-hydrolytic serinolysis, in which the side chain hydroxyl group of the serine supplies its oxygen atom to form the C-terminus of the beta chain, while the remainder of the serine residue undergoes an oxidative deamination to produce ammonia and the pyruvoyl group blocking the N-terminus of the alpha chain.

The catalysed reaction is S-adenosyl-L-methionine + H(+) = S-adenosyl 3-(methylsulfanyl)propylamine + CO2. It functions in the pathway amine and polyamine biosynthesis; S-adenosylmethioninamine biosynthesis; S-adenosylmethioninamine from S-adenosyl-L-methionine: step 1/1. Catalyzes the decarboxylation of S-adenosylmethionine to S-adenosylmethioninamine (dcAdoMet), the propylamine donor required for the synthesis of the polyamines spermine and spermidine from the diamine putrescine. This Azotobacter vinelandii (strain DJ / ATCC BAA-1303) protein is S-adenosylmethionine decarboxylase proenzyme.